We begin with the raw amino-acid sequence, 1164 residues long: Hamartin (1164 aa).

A Glycyl lysine isopeptide (Lys-Gly) (interchain with G-Cter in ubiquitin) cross-link involves residue K30. The interval 403–787 (SDDYVHISLP…QIRQLQHDRE (385 aa)) is mediates interaction with WDR45B. Residues 439–571 (LNDRGSEEPP…ADESPAGDRE (133 aa)) form a disordered region. Residues 474–487 (EKDKEEAAISRELS) are compositionally biased toward basic and acidic residues. Phosphoserine is present on residues S487, S505, S511, S521, and S598. The span at 513–530 (PGSQRKTHSAASSSQGAS) shows a compositional bias: polar residues. Residues 721-997 (RKVIKAAALE…AAEERLDCCN (277 aa)) are a coiled coil. Residues 1006 to 1085 (GHNEEASGHN…TTVGSLPSSK (80 aa)) form a disordered region. The segment covering 1007 to 1020 (HNEEASGHNGETKT) has biased composition (basic and acidic residues). Residues 1073 to 1085 (SIPTTVGSLPSSK) show a composition bias toward polar residues. The residue at position 1100 (S1100) is a Phosphoserine. The disordered stretch occupies residues 1131-1164 (IPLNLDGPHPSPPTPDSVGQLHIMDYNETHHEHS). Residues 1155 to 1164 (DYNETHHEHS) are compositionally biased toward basic and acidic residues.

In terms of assembly, component of the TSC-TBC complex (also named Rhebulator complex), composed of 2 molecules of TSC1, 2 molecules of TSC2 and 1 molecule of TBC1D7. Probably forms a complex composed of chaperones HSP90 and HSP70, co-chaperones STIP1/HOP, CDC37, PPP5C, PTGES3/p23, TSC1 and client protein TSC2. Forms a complex composed of chaperones HSP90 and HSP70, co-chaperones CDC37, PPP5C, TSC1 and client protein TSC2, CDK4, AKT, RAF1 and NR3C1; this complex does not contain co-chaperones STIP1/HOP and PTGES3/p23. Forms a complex containing HSP90AA1, TSC1 and TSC2; TSC1 is required to recruit TCS2 to the complex. Interacts (via C-terminus) with the closed form of HSP90AA1 (via the middle domain and TPR repeat-binding motif). Interacts with DOCK7. Interacts with FBXW5. Interacts with WDR45B. Interacts with RPAP3 and URI1. In terms of processing, phosphorylation at Ser-505 does not affect interaction with TSC2. 'Lys-63'-linked ubiquitinated at Lys-30 by PELI1; the ubiquitination promotes TSC1/TSC2 complex stability. As to expression, highly expressed in skeletal muscle, followed by heart, brain, placenta, pancreas, lung, liver and kidney. Also expressed in embryonic kidney cells.

It localises to the lysosome membrane. It is found in the cytoplasm. Its subcellular location is the cytosol. In terms of biological role, non-catalytic component of the TSC-TBC complex, a multiprotein complex that acts as a negative regulator of the canonical mTORC1 complex, an evolutionarily conserved central nutrient sensor that stimulates anabolic reactions and macromolecule biosynthesis to promote cellular biomass generation and growth. The TSC-TBC complex acts as a GTPase-activating protein (GAP) for the small GTPase RHEB, a direct activator of the protein kinase activity of mTORC1. In absence of nutrients, the TSC-TBC complex inhibits mTORC1, thereby preventing phosphorylation of ribosomal protein S6 kinase (RPS6KB1 and RPS6KB2) and EIF4EBP1 (4E-BP1) by the mTORC1 signaling. The TSC-TBC complex is inactivated in response to nutrients, relieving inhibition of mTORC1. Within the TSC-TBC complex, TSC1 stabilizes TSC2 and prevents TSC2 self-aggregation. Acts as a tumor suppressor. Involved in microtubule-mediated protein transport via its ability to regulate mTORC1 signaling. Also acts as a co-chaperone for HSP90AA1 facilitating HSP90AA1 chaperoning of protein clients such as kinases, TSC2 and glucocorticoid receptor NR3C1. Increases ATP binding to HSP90AA1 and inhibits HSP90AA1 ATPase activity. Competes with the activating co-chaperone AHSA1 for binding to HSP90AA1, thereby providing a reciprocal regulatory mechanism for chaperoning of client proteins. Recruits TSC2 to HSP90AA1 and stabilizes TSC2 by preventing the interaction between TSC2 and ubiquitin ligase HERC1. The sequence is that of Hamartin from Homo sapiens (Human).